We begin with the raw amino-acid sequence, 269 residues long: MQRIYLLSDATGETVERVVRAALTQFKNVDVKLHRMSRLRTREDISLALDEAAKQPGVIFYTLVDNVLAQYLHNEANLRELEAIDLITPLLFKLASLLGIPPQKEPGLLYQLNTEYYKRMEAVDFTVKQDDGQEPRNLYKADIVLVGVSRTSKTPLSMYLAHKGYKVANVPIVLGIEPPKELYQVEKIRVVGLIIDAKRLVDIRSARLRNMRQSPRGSYADYQRVEEELDYCRKLYRKHPDWQVIDVTNKSVEESAAEILKRYDEGFPD.

147–154 (GVSRTSKT) lines the ADP pocket.

The protein belongs to the pyruvate, phosphate/water dikinase regulatory protein family. PDRP subfamily.

It catalyses the reaction N(tele)-phospho-L-histidyl/L-threonyl-[pyruvate, phosphate dikinase] + ADP = N(tele)-phospho-L-histidyl/O-phospho-L-threonyl-[pyruvate, phosphate dikinase] + AMP + H(+). The enzyme catalyses N(tele)-phospho-L-histidyl/O-phospho-L-threonyl-[pyruvate, phosphate dikinase] + phosphate + H(+) = N(tele)-phospho-L-histidyl/L-threonyl-[pyruvate, phosphate dikinase] + diphosphate. Functionally, bifunctional serine/threonine kinase and phosphorylase involved in the regulation of the pyruvate, phosphate dikinase (PPDK) by catalyzing its phosphorylation/dephosphorylation. The sequence is that of Putative pyruvate, phosphate dikinase regulatory protein from Geotalea uraniireducens (strain Rf4) (Geobacter uraniireducens).